A 2138-amino-acid polypeptide reads, in one-letter code: Protein virilizer homolog (2138 aa).

5 disordered regions span residues 1503–1574 (RLPQ…SMHV), 1638–1664 (NPTP…DDLQ), 1855–1881 (PVIP…SSGG), 2013–2035 (PMQP…QGVS), and 2058–2094 (YYHP…QESG). Polar residues predominate over residues 1528–1541 (ENSSVDIPTQNSIQ). 2 stretches are compositionally biased toward polar residues: residues 1862–1881 (DSLS…SSGG) and 2025–2035 (QISQPSEQGVS).

It belongs to the vir family. In terms of assembly, interacts with MTB, FIP37 and HAKAI. Associates with MTA, MTB, FIP37 and HAKAI to form the m6A writer complex which is essential for adenosine methylation at specific mRNA sequences.

The protein resides in the nucleus speckle. It is found in the nucleus. Its subcellular location is the nucleoplasm. Functionally, subunit of the N6-methyltransferase complex, a multiprotein complex that mediates N6-methyladenosine (m6A) methylation at the 5'-[AG]GAC-3' consensus sites of some mRNAs. Associates with MTA, MTB, FIP37 and HAKAI to form the m6A writer complex which is essential for adenosine methylation at specific mRNA sequences. N6-methyladenosine (m6A) plays a role in mRNA stability, processing, translation efficiency and editing. In Arabidopsis thaliana (Mouse-ear cress), this protein is Protein virilizer homolog.